A 400-amino-acid chain; its full sequence is MDEDGGGEGGGVPEDLSLEEREELLDIRRRKKELIDDIERLKYEIAEVMTEIDNLTSVEESKTTQRNKQIAMGRKKFNMDPKKGIQFLIENDLLQSSPEDVAQFLYKGEGLNKTVIGDYLGERDEFNIKVLQAFVELHEFADLNLVQALRQFLWSFRLPGEAQKIDRMMEAFASRYCLCNPGVFQSTDTCYVLSFAIIMLNTSLHNHNVRDKPTAERFIAMNRGINEGGDLPEELLRNLYESIKNEPFKIPEDDGNDLTHTFFNPDREGWLLKLGGGRVKTWKRRWFILTDNCLYYFEYTTDKEPRGIIPLENLSIREVEDPRKPNCFELYNPSHKGQVIKACKTEADGRVVEGNHVVYRISAPSPEEKEEWMKSIKASISRDPFYDMLATRKRRIANKK.

The stretch at 14-61 (EDLSLEEREELLDIRRRKKELIDDIERLKYEIAEVMTEIDNLTSVEES) forms a coiled coil. Residues 77–206 (FNMDPKKGIQ…IIMLNTSLHN (130 aa)) form the SEC7 domain. The region spanning 264 to 381 (NPDREGWLLK…WMKSIKASIS (118 aa)) is the PH domain. A 1,2-diacyl-sn-glycero-3-phospho-(1D-myo-inositol-3,4,5-trisphosphate) contacts are provided by residues 273–281 (KLGGGRVKT), arginine 285, tyrosine 296, arginine 306, and asparagine 355. Positions 392-400 (RKRRIANKK) are C-terminal autoinhibitory region.

Interacts with TAMALIN. Interacts with ARF6. Interacts with FRMD4A. Interacts with FRMD4B. As to expression, almost absent from liver, thymus and peripheral blood lymphocytes.

It localises to the cytoplasm. Its subcellular location is the cytosol. It is found in the cell membrane. The protein resides in the cell junction. The protein localises to the adherens junction. It localises to the tight junction. Promotes guanine-nucleotide exchange on ARF1 and ARF6. Promotes the activation of ARF factors through replacement of GDP with GTP. Plays a role in the epithelial polarization. This chain is Cytohesin-3, found in Homo sapiens (Human).